A 484-amino-acid polypeptide reads, in one-letter code: ATP synthase subunit beta (484 aa).

Gly162 to Thr169 is a binding site for ATP.

This sequence belongs to the ATPase alpha/beta chains family. As to quaternary structure, F-type ATPases have 2 components, CF(1) - the catalytic core - and CF(0) - the membrane proton channel. CF(1) has five subunits: alpha(3), beta(3), gamma(1), delta(1), epsilon(1). CF(0) has three main subunits: a(1), b(2) and c(9-12). The alpha and beta chains form an alternating ring which encloses part of the gamma chain. CF(1) is attached to CF(0) by a central stalk formed by the gamma and epsilon chains, while a peripheral stalk is formed by the delta and b chains.

Its subcellular location is the cell inner membrane. The enzyme catalyses ATP + H2O + 4 H(+)(in) = ADP + phosphate + 5 H(+)(out). Its function is as follows. Produces ATP from ADP in the presence of a proton gradient across the membrane. The catalytic sites are hosted primarily by the beta subunits. The chain is ATP synthase subunit beta from Agrobacterium fabrum (strain C58 / ATCC 33970) (Agrobacterium tumefaciens (strain C58)).